A 596-amino-acid polypeptide reads, in one-letter code: Putative ankyrin repeat protein FPV024 (596 aa).

13 ANK repeats span residues 5–34 (KLRK…TFSN), 37–66 (ALST…DINK), 68–96 (KSPP…DIEK), 99–128 (LGNS…DPNT), 130–158 (FINY…SLNI), 162–191 (HFKT…SLTI), 195–225 (YNNH…PVNE), 229–258 (LERT…DPNI), 262–291 (CLGT…NVNI), 295–324 (TIDT…NTRL), 326–355 (SRNP…EVNI), 359–389 (EGYT…NPNM), and 394–423 (NENT…DVHS).

The chain is Putative ankyrin repeat protein FPV024 from Fowlpox virus (strain NVSL) (FPV).